Here is a 670-residue protein sequence, read N- to C-terminus: NAD-dependent histone deacetylase SIR2 (670 aa).

Disordered stretches follow at residues 1-157 (MTEY…EHPI) and 235-263 (DNDDSLPQKNSSETKNVSDTYTATYPSPS). Residues 45–68 (NEDVDVDADADVDADADADADAEE) are compositionally biased toward acidic residues. The span at 69–81 (DAQKDILEETKAD) shows a compositional bias: basic and acidic residues. Residues 82–92 (ELDEVVDEYEE) show a composition bias toward acidic residues. Over residues 96 to 119 (SSNFNGTASDHVGITSSNTGSTAL) the composition is skewed to polar residues. Residues 120–142 (AASSADTNSGSGNGTGTMATNGT) are compositionally biased toward low complexity. The segment covering 239–261 (SLPQKNSSETKNVSDTYTATYPS) has biased composition (polar residues). In terms of domain architecture, Deacetylase sirtuin-type spans 293-583 (RLTNFHTIDD…ALVAQKCGWD (291 aa)). Residues 318-337 (GAGISTSLGIPDFRSSEGFY) and 400-403 (QNID) contribute to the NAD(+) site. The active-site Proton acceptor is histidine 420. Residues cysteine 428, cysteine 431, cysteine 452, and cysteine 455 each coordinate Zn(2+). Residues 527–529 (GTS), 552–554 (NKD), and cysteine 569 each bind NAD(+). Residues 617-670 (AELEAEEEKHLPLQQSTAALTPPVSLSADSPGRSSSSSPQPPTQTDIANNQTST) are disordered. Residues 641 to 654 (SLSADSPGRSSSSS) are compositionally biased toward low complexity. A compositionally biased stretch (polar residues) spans 659–670 (TQTDIANNQTST).

This sequence belongs to the sirtuin family. Class I subfamily. The cofactor is Zn(2+).

The protein localises to the nucleus. The enzyme catalyses N(6)-acetyl-L-lysyl-[protein] + NAD(+) + H2O = 2''-O-acetyl-ADP-D-ribose + nicotinamide + L-lysyl-[protein]. Its function is as follows. NAD-dependent deacetylase, which asts as a key regulator of gene expression believed to help form modified chromatin structures on the genes it regulates. It is involved in telomeric silencing and in hm mating type loci silencing. The polypeptide is NAD-dependent histone deacetylase SIR2 (SIR2) (Kluyveromyces lactis (strain ATCC 8585 / CBS 2359 / DSM 70799 / NBRC 1267 / NRRL Y-1140 / WM37) (Yeast)).